The primary structure comprises 242 residues: Small ribosomal subunit protein uS2 (242 aa).

The protein belongs to the universal ribosomal protein uS2 family.

The sequence is that of Small ribosomal subunit protein uS2 from Shewanella frigidimarina (strain NCIMB 400).